A 215-amino-acid polypeptide reads, in one-letter code: Heart- and neural crest derivatives-expressed protein 1 (215 aa).

Disordered regions lie at residues 53–109 and 169–202; these read APDF…RTES and VDGG…KGRT. Low complexity predominate over residues 65 to 75; it reads AAAAAATYGPD. Residues 92–104 are compositionally biased toward basic residues; the sequence is LGRRKGSGPKKER. The bHLH domain occupies 94-146; sequence RRKGSGPKKERRRTESINSAFAELRECIPNVPADTKLSKIKTLRLATSYIAYL. T107 carries the phosphothreonine; by PLK4 modification. The residue at position 109 (S109) is a Phosphoserine; by PLK4.

In terms of assembly, efficient DNA binding requires dimerization with another bHLH protein. Forms homodimers and heterodimers with TCF3 gene products E12 and E47, HAND2 and HEY1, HEY2 and HEYL (hairy-related transcription factors). Interacts with MDFIC. Interacts with SOX15; the interaction enhances HAND1-induced differentiation of trophoblast giant cells. Post-translationally, phosphorylation by PLK4 disrupts the interaction with MDFIC and leads to translocation into the nucleoplasm, allowing dimerization and transcription factor activity.

Its subcellular location is the nucleus. The protein localises to the nucleoplasm. The protein resides in the nucleolus. Its function is as follows. Transcription factor that plays an essential role in both trophoblast giant cell differentiation and in cardiac morphogenesis. Binds the DNA sequence 5'-NRTCTG-3' (non-canonical E-box). Acts as a transcriptional repressor of SOX15. In the adult, could be required for ongoing expression of cardiac-specific genes. The protein is Heart- and neural crest derivatives-expressed protein 1 (HAND1) of Oryctolagus cuniculus (Rabbit).